The chain runs to 136 residues: Ribonuclease P protein component (136 aa).

The protein belongs to the RnpA family. As to quaternary structure, consists of a catalytic RNA component (M1 or rnpB) and a protein subunit.

The enzyme catalyses Endonucleolytic cleavage of RNA, removing 5'-extranucleotides from tRNA precursor.. Its function is as follows. RNaseP catalyzes the removal of the 5'-leader sequence from pre-tRNA to produce the mature 5'-terminus. It can also cleave other RNA substrates such as 4.5S RNA. The protein component plays an auxiliary but essential role in vivo by binding to the 5'-leader sequence and broadening the substrate specificity of the ribozyme. This is Ribonuclease P protein component from Burkholderia mallei (strain NCTC 10247).